The following is a 971-amino-acid chain: Lon protease homolog, mitochondrial (971 aa).

A mitochondrion-targeting transit peptide spans 1-55 (MYRAGAVLLRGATRTRLLAAASAHQSFATFSQRNQSILMMKSMELAGNSGERRFY). Residues 89 to 359 (VPMLAINRYP…IALLLIQKEK (271 aa)) form the Lon N-terminal domain. Positions 190 to 255 (TPKNETPLNG…PPSATGEKQK (66 aa)) are disordered. Residues 214 to 224 (LTPPPSPPPLA) are compositionally biased toward pro residues. 512-519 (GPPGVGKT) provides a ligand contact to ATP. A disordered region spans residues 718-749 (AEQQNEDEEPAEKATTAITENSEAEPITSTSS). The segment covering 733 to 749 (TAITENSEAEPITSTSS) has biased composition (polar residues). A Lon proteolytic domain is found at 784–971 (VTPPGVIMGL…YDELYEHLFQ (188 aa)). Residues S878 and K921 contribute to the active site.

It belongs to the peptidase S16 family. In terms of assembly, homohexamer or homoheptamer. Organized in a ring with a central cavity.

It localises to the mitochondrion matrix. The enzyme catalyses Hydrolysis of proteins in presence of ATP.. Its function is as follows. ATP-dependent serine protease that mediates the selective degradation of misfolded, unassembled or oxidatively damaged polypeptides as well as certain short-lived regulatory proteins in the mitochondrial matrix. May also have a chaperone function in the assembly of inner membrane protein complexes. Participates in the regulation of mitochondrial gene expression and in the maintenance of the integrity of the mitochondrial genome. Binds to mitochondrial DNA in a site-specific manner. Involved in the degradation of transcription factor atfs-1 in the mitochondrion. The polypeptide is Lon protease homolog, mitochondrial (Caenorhabditis elegans).